The chain runs to 505 residues: Protein FAM114A2 (505 aa).

The disordered stretch occupies residues 1–65 (MSDKDDIETP…KPSSDLETSK (65 aa)). The span at 51-63 (KRPETKPSSDLET) shows a compositional bias: basic and acidic residues. Serine 87, serine 146, and serine 209 each carry phosphoserine. Residues 268–295 (LNSLSGEELETLKVELEQLKETFSLAEF) are a coiled coil. The interval 342–366 (KSLTKPLAENEEGEKQSEAENTEQV) is disordered.

Belongs to the FAM114 family.

The polypeptide is Protein FAM114A2 (FAM114A2) (Homo sapiens (Human)).